A 400-amino-acid polypeptide reads, in one-letter code: Protein phosphatase methylesterase 1 (400 aa).

The segment at 1–72 (MSDLQRTWAK…NQKLFARPQG (72 aa)) is disordered. The segment covering 19 to 28 (PFDEPQEEQG) has biased composition (acidic residues). Over residues 44 to 54 (SSASSASSVSS) the composition is skewed to low complexity. The segment covering 55 to 64 (TGTIIPSPNQ) has biased composition (polar residues). Catalysis depends on residues serine 202, aspartate 228, and histidine 358.

This sequence belongs to the AB hydrolase superfamily.

The catalysed reaction is [phosphatase 2A protein]-C-terminal L-leucine methyl ester + H2O = [phosphatase 2A protein]-C-terminal L-leucine + methanol + H(+). Demethylates proteins that have been reversibly carboxymethylated. Demethylates the phosphatase PP2A catalytic subunit. In Gibberella zeae (strain ATCC MYA-4620 / CBS 123657 / FGSC 9075 / NRRL 31084 / PH-1) (Wheat head blight fungus), this protein is Protein phosphatase methylesterase 1 (PPE1).